Reading from the N-terminus, the 205-residue chain is uncharacterized protein (205 aa).

The 82-residue stretch at 1–82 (MIKVYGVPGW…MVLDRRPDLA (82 aa)) folds into the GST N-terminal domain. Residues V53 and 66–67 (ET) contribute to the glutathione site. Residues 86 to 205 (GRAERQLFQR…QEVLKRNEII (120 aa)) enclose the GST C-terminal domain.

The protein belongs to the GST superfamily. Beta family.

This is an uncharacterized protein from Escherichia coli (strain K12).